A 119-amino-acid chain; its full sequence is Large ribosomal subunit protein uL18 (119 aa).

The segment at 1-24 (MITKQDKNQVRKKRHARVRSKISG) is disordered. The segment covering 10–20 (VRKKRHARVRS) has biased composition (basic residues).

The protein belongs to the universal ribosomal protein uL18 family. As to quaternary structure, part of the 50S ribosomal subunit; part of the 5S rRNA/L5/L18/L25 subcomplex. Contacts the 5S and 23S rRNAs.

This is one of the proteins that bind and probably mediate the attachment of the 5S RNA into the large ribosomal subunit, where it forms part of the central protuberance. The chain is Large ribosomal subunit protein uL18 from Lysinibacillus sphaericus (strain C3-41).